Reading from the N-terminus, the 713-residue chain is Polyribonucleotide nucleotidyltransferase (713 aa).

Residues Asp498 and Asp504 each contribute to the Mg(2+) site. In terms of domain architecture, KH spans 565–631; it reads PRILSLKVPV…RIEDLTREAK (67 aa). One can recognise an S1 motif domain in the interval 633–701; that stretch reads GEIYEGTVTR…ERGKIDLIRP (69 aa).

The protein belongs to the polyribonucleotide nucleotidyltransferase family. Mg(2+) is required as a cofactor.

The protein localises to the cytoplasm. The catalysed reaction is RNA(n+1) + phosphate = RNA(n) + a ribonucleoside 5'-diphosphate. Its function is as follows. Involved in mRNA degradation. Catalyzes the phosphorolysis of single-stranded polyribonucleotides processively in the 3'- to 5'-direction. The sequence is that of Polyribonucleotide nucleotidyltransferase from Thermus thermophilus (strain ATCC 27634 / DSM 579 / HB8).